Consider the following 530-residue polypeptide: MKAWGALWIVLGLLLWPEPGAASSLPLLMDSIIQALAELEQKVPVTEASITASAWILSAKNSSTHNSLHQRLLLKAPSHNTTEPDPHSLSPELQALISEVAQHDVQNGREYGVVLAPDGSTVAVKPLLFGLEAGLQAHSVANLPSDCLAIPCDTGDTLANIRATWPGLMDAFPNASSPDVGATLPNDKAKTPTTVDRLLAITLAGDLGLTFLHRSQTWSPPGLGTEGCWDQLTAPRVFTLLDPQASRLTMAFLNGALDGALLGNHLSQIPRPHPPLSHLLREYYGAGVNGDPVFRSNFRRQNGAALTSAPTLAQQVWEALVLLQKLEPEHLQLQNISQEQLAQVATLATKEFTEAFLGCPAIHPRCRWGAAPYRGHPTPLRLPLGFLYVHHTYVPAPPCTTFQSCAADMRSMQRFHQDVRKWDDIGYSFVVGSDGYLYQGRGWHWVGAHTRGYNSRGFGVAFVGNYTGSLPNEAALNTVRDALPSCAIRAGLLRPDYKLLGHRQLVLTHCPGNALFNLLRTWPHFTEVEN.

A signal peptide spans 1-22 (MKAWGALWIVLGLLLWPEPGAA). Residues Asn61, Asn80, and Asn174 are each glycosylated (N-linked (GlcNAc...) asparagine). Ser219 carries the post-translational modification Phosphoserine. Residue Asn335 is glycosylated (N-linked (GlcNAc...) asparagine). Residues 386-512 (FLYVHHTYVP…RQLVLTHCPG (127 aa)) enclose the N-acetylmuramoyl-L-alanine amidase domain. His390 contacts Zn(2+). Cys399 and Cys405 form a disulfide bridge. A glycan (N-linked (GlcNAc...) asparagine) is linked at Asn465. 2 residues coordinate Zn(2+): His502 and Cys510.

It belongs to the N-acetylmuramoyl-L-alanine amidase 2 family. Zn(2+) is required as a cofactor. In terms of tissue distribution, strongly expressed in liver and fetal liver.

Its subcellular location is the secreted. It is found in the membrane. It carries out the reaction Hydrolyzes the link between N-acetylmuramoyl residues and L-amino acid residues in certain cell-wall glycopeptides.. Functionally, may play a scavenger role by digesting biologically active peptidoglycan (PGN) into biologically inactive fragments. Has no direct bacteriolytic activity. In Mus musculus (Mouse), this protein is N-acetylmuramoyl-L-alanine amidase (Pglyrp2).